A 363-amino-acid polypeptide reads, in one-letter code: Large ribosomal subunit protein uL4A (363 aa).

A Phosphoserine modification is found at Ser-87. The tract at residues 280-363 (PENIISNADV…EKFLTVLHEN (84 aa)) is C-terminal-extended nuclear localization signal.

The protein belongs to the universal ribosomal protein uL4 family. Component of the large ribosomal subunit (LSU). Mature yeast ribosomes consist of a small (40S) and a large (60S) subunit. The 40S small subunit contains 1 molecule of ribosomal RNA (18S rRNA) and at least 33 different proteins. The large 60S subunit contains 3 rRNA molecules (25S, 5.8S and 5S rRNA) and at least 46 different proteins. uL4 is associated with the polypeptide exit tunnel. uL4 interacts with its chaperone ACL4 and the nuclear import receptor KAP104.

It localises to the cytoplasm. Its subcellular location is the nucleus. Its function is as follows. Component of the ribosome, a large ribonucleoprotein complex responsible for the synthesis of proteins in the cell. The small ribosomal subunit (SSU) binds messenger RNAs (mRNAs) and translates the encoded message by selecting cognate aminoacyl-transfer RNA (tRNA) molecules. The large subunit (LSU) contains the ribosomal catalytic site termed the peptidyl transferase center (PTC), which catalyzes the formation of peptide bonds, thereby polymerizing the amino acids delivered by tRNAs into a polypeptide chain. The nascent polypeptides leave the ribosome through a tunnel in the LSU and interact with protein factors that function in enzymatic processing, targeting, and the membrane insertion of nascent chains at the exit of the ribosomal tunnel. uL4 participates in the regulation of the accumulation of its own mRNA. The protein is Large ribosomal subunit protein uL4A (rpl402) of Schizosaccharomyces pombe (strain 972 / ATCC 24843) (Fission yeast).